A 505-amino-acid polypeptide reads, in one-letter code: Beta-agarase (505 aa).

Residues 1 to 23 (MLKVIPWLLVTSSLVAIPTYIHA) form the signal peptide. The Proton donor role is filled by E200. Catalysis depends on E322, which acts as the Nucleophile.

This sequence belongs to the glycosyl hydrolase 86 family.

The protein localises to the secreted. It carries out the reaction Hydrolysis of (1-&gt;4)-beta-D-galactosidic linkages in agarose, giving the tetramer as the predominant product.. In terms of biological role, hydrolase that cleaves agar at the (1-&gt;4) linkage, producing tetrameric saccharide molecules. Is specific for agar and agarose and does not digest alginate or carrageenan. This is Beta-agarase from Pseudoalteromonas atlantica (Alteromonas atlantica).